A 226-amino-acid chain; its full sequence is Large ribosomal subunit protein uL1 (226 aa).

The protein belongs to the universal ribosomal protein uL1 family. As to quaternary structure, part of the 50S ribosomal subunit.

In terms of biological role, binds directly to 23S rRNA. The L1 stalk is quite mobile in the ribosome, and is involved in E site tRNA release. Protein L1 is also a translational repressor protein, it controls the translation of the L11 operon by binding to its mRNA. The polypeptide is Large ribosomal subunit protein uL1 (Borrelia garinii subsp. bavariensis (strain ATCC BAA-2496 / DSM 23469 / PBi) (Borreliella bavariensis)).